Consider the following 335-residue polypeptide: MNPLDLIAKRAYPYETEKRDKTYLALNENPFPFPEDLVDEVFRRLNSDALRIYYDSPDEELIEKILSYLDTDFLSKNNVSVGNGADEIIYVMMLMFDRSVFFPPTYSCYRIFAKAVGAKFLEVPLTKDLRIPEVNVGEGDVVFIPNPNNPTGHVFEREEIERILKTGAFVALDEAYYEFHGESYVDFLKKYENLAVIRTFSKAFSLAAQRVGYVVASEKFIDAYNRVRLPFNVSYVSQMFAKVALDHREIFEERTKFIVEERERMKSALREMGYRITDSRGNFVFVFMEKEEKERLLEHLRTKNVAVRSFREGVRITIGKREENDMILRELEVFK.

Lys-202 is modified (N6-(pyridoxal phosphate)lysine).

It belongs to the class-II pyridoxal-phosphate-dependent aminotransferase family. Histidinol-phosphate aminotransferase subfamily. As to quaternary structure, homodimer. It depends on pyridoxal 5'-phosphate as a cofactor.

The enzyme catalyses L-histidinol phosphate + 2-oxoglutarate = 3-(imidazol-4-yl)-2-oxopropyl phosphate + L-glutamate. Its pathway is amino-acid biosynthesis; L-histidine biosynthesis; L-histidine from 5-phospho-alpha-D-ribose 1-diphosphate: step 7/9. This Thermotoga maritima (strain ATCC 43589 / DSM 3109 / JCM 10099 / NBRC 100826 / MSB8) protein is Histidinol-phosphate aminotransferase.